Here is a 446-residue protein sequence, read N- to C-terminus: tRNA modification GTPase MnmE (446 aa).

The (6S)-5-formyl-5,6,7,8-tetrahydrofolate site is built by arginine 24, glutamate 81, and lysine 120. The region spanning 216–368 (GLHAVLIGPP…LHIRLRELAL (153 aa)) is the TrmE-type G domain. Residue asparagine 226 participates in K(+) binding. Residues 226–231 (NAGKSS), 245–251 (TDVAGTT), and 270–273 (DTAG) contribute to the GTP site. Serine 230 contacts Mg(2+). Residues threonine 245, valine 247, and threonine 250 each contribute to the K(+) site. Threonine 251 is a Mg(2+) binding site. Lysine 446 serves as a coordination point for (6S)-5-formyl-5,6,7,8-tetrahydrofolate.

It belongs to the TRAFAC class TrmE-Era-EngA-EngB-Septin-like GTPase superfamily. TrmE GTPase family. Homodimer. Heterotetramer of two MnmE and two MnmG subunits. Requires K(+) as cofactor.

The protein localises to the cytoplasm. Its function is as follows. Exhibits a very high intrinsic GTPase hydrolysis rate. Involved in the addition of a carboxymethylaminomethyl (cmnm) group at the wobble position (U34) of certain tRNAs, forming tRNA-cmnm(5)s(2)U34. This is tRNA modification GTPase MnmE from Xanthomonas oryzae pv. oryzae (strain KACC10331 / KXO85).